The sequence spans 302 residues: UPF0761 membrane protein Tola_0461 (302 aa).

6 consecutive transmembrane segments (helical) span residues 51–71 (YVSL…LSWL), 111–131 (TTSI…AAID), 150–170 (ITMY…SLLL), 188–208 (LGGG…ILLL), 222–242 (ALLG…GFGY), and 256–276 (ALAG…VVLL).

This sequence belongs to the UPF0761 family.

Its subcellular location is the cell inner membrane. The protein is UPF0761 membrane protein Tola_0461 of Tolumonas auensis (strain DSM 9187 / NBRC 110442 / TA 4).